Reading from the N-terminus, the 644-residue chain is ATP-dependent zinc metalloprotease FtsH (644 aa).

Topologically, residues 1–4 (MAKN) are cytoplasmic. Residues 5-25 (LILWLVIAVVLMSVFQSFGPS) form a helical membrane-spanning segment. Topologically, residues 26 to 98 (ESNGRKVDYS…VGEPPEEPSL (73 aa)) are periplasmic. Residues 99 to 119 (LASIFISWFPMLLLIGVWIFF) traverse the membrane as a helical segment. At 120 to 644 (MRQMQGGGGK…NTMSEQLGDK (525 aa)) the chain is on the cytoplasmic side. An ATP-binding site is contributed by 192-199 (GPPGTGKT). A Zn(2+)-binding site is contributed by H414. The active site involves E415. Zn(2+) is bound by residues H418 and D492. A disordered region spans residues 598–644 (VRPPAGWEEPGASNNAGDNGSPKAPRPVDEPRTPNPGNTMSEQLGDK). A compositionally biased stretch (polar residues) spans 632–644 (NPGNTMSEQLGDK).

The protein in the central section; belongs to the AAA ATPase family. It in the C-terminal section; belongs to the peptidase M41 family. Homohexamer. Zn(2+) serves as cofactor.

The protein resides in the cell inner membrane. Acts as a processive, ATP-dependent zinc metallopeptidase for both cytoplasmic and membrane proteins. Plays a role in the quality control of integral membrane proteins. This chain is ATP-dependent zinc metalloprotease FtsH, found in Escherichia coli O157:H7.